Reading from the N-terminus, the 595-residue chain is Ketol-acid reductoisomerase, chloroplastic (595 aa).

The transit peptide at 1-72 (MAATAATTFS…GGGSALSAQM (72 aa)) directs the protein to the chloroplast. The KARI N-terminal Rossmann domain maps to 108 to 306 (VRGGRNLFPL…ALGSPFTFAT (199 aa)). Residues 129-136 (GVIGWGSQ), 162-167 (RKGSNS), and 201-205 (SDSAQ) contribute to the NADP(+) site. Residue His226 is part of the active site. KARI C-terminal knotted domains are found at residues 307–455 (TLEQ…RPAG) and 456–592 (DLGP…RPEL). Mg(2+)-binding residues include Asp315, Glu319, Glu492, and Glu496. Ser518 is a binding site for substrate.

It belongs to the ketol-acid reductoisomerase family. As to quaternary structure, homodimer. Mg(2+) serves as cofactor.

It localises to the plastid. The protein resides in the chloroplast. It catalyses the reaction (2R)-2,3-dihydroxy-3-methylbutanoate + NADP(+) = (2S)-2-acetolactate + NADPH + H(+). It carries out the reaction (2R,3R)-2,3-dihydroxy-3-methylpentanoate + NADP(+) = (S)-2-ethyl-2-hydroxy-3-oxobutanoate + NADPH + H(+). Its pathway is amino-acid biosynthesis; L-isoleucine biosynthesis; L-isoleucine from 2-oxobutanoate: step 2/4. It participates in amino-acid biosynthesis; L-valine biosynthesis; L-valine from pyruvate: step 2/4. The chain is Ketol-acid reductoisomerase, chloroplastic (AHRI) from Spinacia oleracea (Spinach).